Here is a 184-residue protein sequence, read N- to C-terminus: ATP-dependent protease subunit HslV (184 aa).

T12 is an active-site residue. Na(+)-binding residues include A166, C169, and T172.

The protein belongs to the peptidase T1B family. HslV subfamily. A double ring-shaped homohexamer of HslV is capped on each side by a ring-shaped HslU homohexamer. The assembly of the HslU/HslV complex is dependent on binding of ATP.

The protein resides in the cytoplasm. The enzyme catalyses ATP-dependent cleavage of peptide bonds with broad specificity.. With respect to regulation, allosterically activated by HslU binding. In terms of biological role, protease subunit of a proteasome-like degradation complex believed to be a general protein degrading machinery. The sequence is that of ATP-dependent protease subunit HslV from Brucella ovis (strain ATCC 25840 / 63/290 / NCTC 10512).